Consider the following 155-residue polypeptide: NADPH-dependent 7-cyano-7-deazaguanine reductase (155 aa).

Cys-53 acts as the Thioimide intermediate in catalysis. Asp-60 acts as the Proton donor in catalysis. Residues 75-77 and 94-95 each bind substrate; these read VES and HE.

Belongs to the GTP cyclohydrolase I family. QueF type 1 subfamily.

Its subcellular location is the cytoplasm. It catalyses the reaction 7-aminomethyl-7-carbaguanine + 2 NADP(+) = 7-cyano-7-deazaguanine + 2 NADPH + 3 H(+). Its pathway is tRNA modification; tRNA-queuosine biosynthesis. Functionally, catalyzes the NADPH-dependent reduction of 7-cyano-7-deazaguanine (preQ0) to 7-aminomethyl-7-deazaguanine (preQ1). The protein is NADPH-dependent 7-cyano-7-deazaguanine reductase of Brucella abortus (strain S19).